The sequence spans 111 residues: BET1-like protein (111 aa).

Residues 1–86 (MADWTRAQSS…MARSGRDNRK (86 aa)) are Cytoplasmic-facing. Serine 9 and serine 37 each carry phosphoserine. Positions 15–77 (DILDRENKRM…TGSVKRFSTM (63 aa)) constitute a t-SNARE coiled-coil homology domain. Residues 87–107 (LLCGMAVVLIVAFFILSYLLS) form a helical; Anchor for type IV membrane protein membrane-spanning segment. At 108–111 (RTRT) the chain is on the lumenal side.

In terms of assembly, component of a SNARE complex consisting of STX5, YKT6, GOSR1 and BET1L. Interacts with STX5.

It localises to the golgi apparatus membrane. Its subcellular location is the golgi apparatus. It is found in the trans-Golgi network membrane. Functionally, vesicle SNARE required for targeting and fusion of retrograde transport vesicles with the Golgi complex. Required for the integrity of the Golgi complex. This chain is BET1-like protein, found in Mus musculus (Mouse).